The primary structure comprises 261 residues: uncharacterized protein (261 aa).

Residues 7-122 (TAVLADDEPL…RLASCCEKLQ (116 aa)) enclose the Response regulatory domain. Asp54 carries the post-translational modification 4-aspartylphosphate. Residues 157–261 (LKASKGEEIH…RALQHLFKVS (105 aa)) form the HTH LytTR-type domain.

This is an uncharacterized protein from Vibrio cholerae serotype O1 (strain ATCC 39315 / El Tor Inaba N16961).